We begin with the raw amino-acid sequence, 603 residues long: Granule-bound starch synthase 1, chloroplastic/amyloplastic (603 aa).

A chloroplast-targeting transit peptide spans 1–75 (MATITGSSMP…SEKSLGKIVC (75 aa)). ADP-alpha-D-glucose is bound at residue Lys91.

Belongs to the glycosyltransferase 1 family. Bacterial/plant glycogen synthase subfamily. Expressed in pods and leaves. No expression in flowers or stipules.

It localises to the plastid. Its subcellular location is the chloroplast. It is found in the amyloplast. The enzyme catalyses an NDP-alpha-D-glucose + [(1-&gt;4)-alpha-D-glucosyl](n) = [(1-&gt;4)-alpha-D-glucosyl](n+1) + a ribonucleoside 5'-diphosphate + H(+). It functions in the pathway glycan biosynthesis; starch biosynthesis. May be responsible for the synthesis of amylose. The protein is Granule-bound starch synthase 1, chloroplastic/amyloplastic of Pisum sativum (Garden pea).